Consider the following 455-residue polypeptide: Bifunctional protein GlmU (455 aa).

The pyrophosphorylase stretch occupies residues 1 to 229 (MYNCAILLAA…FEETMGVNSR (229 aa)). UDP-N-acetyl-alpha-D-glucosamine-binding positions include 8–11 (LAAG), Lys-22, Gln-73, and 78–79 (GT). Mg(2+) is bound at residue Asp-103. The UDP-N-acetyl-alpha-D-glucosamine site is built by Gly-140, Glu-155, Asn-170, and Asn-227. Asn-227 lines the Mg(2+) pocket. Residues 230 to 250 (LQLAEVEAIMRKRINAMHLEN) form a linker region. The interval 251 to 455 (GVTIIDPNNT…EDWVKKKDEK (205 aa)) is N-acetyltransferase. UDP-N-acetyl-alpha-D-glucosamine is bound by residues Arg-332 and Lys-350. His-362 functions as the Proton acceptor in the catalytic mechanism. 2 residues coordinate UDP-N-acetyl-alpha-D-glucosamine: Tyr-365 and Asn-376. Residues 385 to 386 (NY), Ala-422, and Arg-439 contribute to the acetyl-CoA site.

In the N-terminal section; belongs to the N-acetylglucosamine-1-phosphate uridyltransferase family. It in the C-terminal section; belongs to the transferase hexapeptide repeat family. As to quaternary structure, homotrimer. Mg(2+) serves as cofactor.

It is found in the cytoplasm. It catalyses the reaction alpha-D-glucosamine 1-phosphate + acetyl-CoA = N-acetyl-alpha-D-glucosamine 1-phosphate + CoA + H(+). The catalysed reaction is N-acetyl-alpha-D-glucosamine 1-phosphate + UTP + H(+) = UDP-N-acetyl-alpha-D-glucosamine + diphosphate. Its pathway is nucleotide-sugar biosynthesis; UDP-N-acetyl-alpha-D-glucosamine biosynthesis; N-acetyl-alpha-D-glucosamine 1-phosphate from alpha-D-glucosamine 6-phosphate (route II): step 2/2. It functions in the pathway nucleotide-sugar biosynthesis; UDP-N-acetyl-alpha-D-glucosamine biosynthesis; UDP-N-acetyl-alpha-D-glucosamine from N-acetyl-alpha-D-glucosamine 1-phosphate: step 1/1. It participates in bacterial outer membrane biogenesis; LPS lipid A biosynthesis. In terms of biological role, catalyzes the last two sequential reactions in the de novo biosynthetic pathway for UDP-N-acetylglucosamine (UDP-GlcNAc). The C-terminal domain catalyzes the transfer of acetyl group from acetyl coenzyme A to glucosamine-1-phosphate (GlcN-1-P) to produce N-acetylglucosamine-1-phosphate (GlcNAc-1-P), which is converted into UDP-GlcNAc by the transfer of uridine 5-monophosphate (from uridine 5-triphosphate), a reaction catalyzed by the N-terminal domain. The polypeptide is Bifunctional protein GlmU (Clostridium tetani (strain Massachusetts / E88)).